The following is a 428-amino-acid chain: D-amino acid dehydrogenase (428 aa).

3–17 contributes to the FAD binding site; it reads VVILGSGVVGVASAY.

Belongs to the DadA oxidoreductase family. FAD is required as a cofactor.

The enzyme catalyses a D-alpha-amino acid + A + H2O = a 2-oxocarboxylate + AH2 + NH4(+). Its pathway is amino-acid degradation; D-alanine degradation; NH(3) and pyruvate from D-alanine: step 1/1. Its function is as follows. Oxidative deamination of D-amino acids. This chain is D-amino acid dehydrogenase, found in Burkholderia thailandensis (strain ATCC 700388 / DSM 13276 / CCUG 48851 / CIP 106301 / E264).